A 198-amino-acid polypeptide reads, in one-letter code: Translation machinery-associated protein 22 (198 aa).

In terms of domain architecture, SUI1 spans 99–170 (VIIKREARTK…EVETYIHSLL (72 aa)).

It belongs to the DENR family. Interacts with the 40S ribosomal subunit.

The protein resides in the cytoplasm. The sequence is that of Translation machinery-associated protein 22 (TMA22) from Saccharomyces cerevisiae (strain YJM789) (Baker's yeast).